Reading from the N-terminus, the 283-residue chain is Malonyl-[acyl-carrier protein] O-methyltransferase (283 aa).

This sequence belongs to the methyltransferase superfamily.

The enzyme catalyses malonyl-[ACP] + S-adenosyl-L-methionine = malonyl-[ACP] methyl ester + S-adenosyl-L-homocysteine. Its pathway is cofactor biosynthesis; biotin biosynthesis. Its function is as follows. Converts the free carboxyl group of a malonyl-thioester to its methyl ester by transfer of a methyl group from S-adenosyl-L-methionine (SAM). It allows to synthesize pimeloyl-ACP via the fatty acid synthetic pathway. This Acetivibrio thermocellus (strain ATCC 27405 / DSM 1237 / JCM 9322 / NBRC 103400 / NCIMB 10682 / NRRL B-4536 / VPI 7372) (Clostridium thermocellum) protein is Malonyl-[acyl-carrier protein] O-methyltransferase.